A 161-amino-acid chain; its full sequence is Peripheral myelin protein 22 (161 aa).

Met-1 is a topological domain (cytoplasmic). A helical membrane pass occupies residues 2-31 (LLLLLGILFLHIAVLVLLFVSTIVSQWLVG). The Extracellular portion of the chain corresponds to 32 to 64 (NGHTTDLWQNCTTSALGAVQHCYSSSVSEWLQS). Asn-41 carries an N-linked (GlcNAc...) asparagine glycan. The chain crosses the membrane as a helical span at residues 65–91 (VQATMILSVIFSVLALFLFFCQLFTLT). Residues 92–95 (KGGR) lie on the Cytoplasmic side of the membrane. Residues 96-119 (FYITGFFQILAGLCVMSAAAIYTV) form a helical membrane-spanning segment. At 120–133 (RHSEWHVNTDYSYG) the chain is on the extracellular side. Residues 134-156 (FAYILAWVAFPLALLSGIIYVIL) traverse the membrane as a helical segment. At 157-160 (RKRE) the chain is on the cytoplasmic side.

It belongs to the PMP-22/EMP/MP20 family. Post-translationally, ubiquitinated by the DCX(DCAF13) E3 ubiquitin ligase complex, leading to its degradation. Schwann cells of the peripheral nervous system. Expressed at growth arrest of mammalian fibroblasts.

The protein resides in the cell membrane. Its function is as follows. Might be involved in growth regulation, and in myelinization in the peripheral nervous system. In Mus musculus (Mouse), this protein is Peripheral myelin protein 22 (Pmp22).